The following is a 249-amino-acid chain: tRNA (guanine-N(7)-)-methyltransferase (249 aa).

The S-adenosyl-L-methionine site is built by Glu-80, Glu-105, Asp-132, and Asp-155. Residue Asp-155 is part of the active site. Residues Lys-159, Asp-191, and 228 to 231 (TKFE) each bind substrate.

This sequence belongs to the class I-like SAM-binding methyltransferase superfamily. TrmB family.

It carries out the reaction guanosine(46) in tRNA + S-adenosyl-L-methionine = N(7)-methylguanosine(46) in tRNA + S-adenosyl-L-homocysteine. It participates in tRNA modification; N(7)-methylguanine-tRNA biosynthesis. Its function is as follows. Catalyzes the formation of N(7)-methylguanine at position 46 (m7G46) in tRNA. The polypeptide is tRNA (guanine-N(7)-)-methyltransferase (Mannheimia succiniciproducens (strain KCTC 0769BP / MBEL55E)).